A 404-amino-acid chain; its full sequence is Cysteine desulfurase IscS (404 aa).

Pyridoxal 5'-phosphate-binding positions include 75 to 76 (AT), Asn155, Gln183, and 203 to 205 (SAH). At Lys206 the chain carries N6-(pyridoxal phosphate)lysine. Thr243 contacts pyridoxal 5'-phosphate. Cys328 acts as the Cysteine persulfide intermediate in catalysis. [2Fe-2S] cluster is bound at residue Cys328.

This sequence belongs to the class-V pyridoxal-phosphate-dependent aminotransferase family. NifS/IscS subfamily. As to quaternary structure, homodimer. Forms a heterotetramer with IscU, interacts with other sulfur acceptors. The cofactor is pyridoxal 5'-phosphate.

It localises to the cytoplasm. The catalysed reaction is (sulfur carrier)-H + L-cysteine = (sulfur carrier)-SH + L-alanine. It participates in cofactor biosynthesis; iron-sulfur cluster biosynthesis. In terms of biological role, master enzyme that delivers sulfur to a number of partners involved in Fe-S cluster assembly, tRNA modification or cofactor biosynthesis. Catalyzes the removal of elemental sulfur atoms from cysteine to produce alanine. Functions as a sulfur delivery protein for Fe-S cluster synthesis onto IscU, an Fe-S scaffold assembly protein, as well as other S acceptor proteins. This Neisseria meningitidis serogroup A / serotype 4A (strain DSM 15465 / Z2491) protein is Cysteine desulfurase IscS.